The sequence spans 168 residues: Urease accessory protein UreE (168 aa).

The segment at 137 to 168 is disordered; sequence PESGAYHGTTGHGGGHSHSHGHSHDHHHDHSH. Residues 151–161 are compositionally biased toward basic residues; it reads GHSHSHGHSHD.

This sequence belongs to the UreE family.

It is found in the cytoplasm. Involved in urease metallocenter assembly. Binds nickel. Probably functions as a nickel donor during metallocenter assembly. This is Urease accessory protein UreE from Saccharophagus degradans (strain 2-40 / ATCC 43961 / DSM 17024).